Consider the following 321-residue polypeptide: Cytochrome c biogenesis protein CcsA (321 aa).

The next 7 helical transmembrane spans lie at 9-29 (ILTHISFSTISIVITIHLITL), 44-64 (GMIATFFSITGFLVSRWVSSG), 68-88 (LSNLYESLIFLSWTLYILHTI), 143-163 (MLLSYATLLCGSLLSAALLII), 225-245 (VISLGFTLLTVGILCGAVWAN), 259-273 (TWAFITWTIFAIYLH), and 288-308 (VASIGFLIIWICYFGINLLGI).

The protein belongs to the CcmF/CycK/Ccl1/NrfE/CcsA family. In terms of assembly, may interact with Ccs1.

It localises to the plastid. Its subcellular location is the chloroplast thylakoid membrane. Its function is as follows. Required during biogenesis of c-type cytochromes (cytochrome c6 and cytochrome f) at the step of heme attachment. This is Cytochrome c biogenesis protein CcsA from Zea mays (Maize).